The chain runs to 24 residues: Positive regulator of RepFIC repA1 expression (24 aa).

In Escherichia coli, this protein is Positive regulator of RepFIC repA1 expression (repL).